The sequence spans 317 residues: COP9 signalosome complex subunit 6b (317 aa).

The 154-residue stretch at 11–164 folds into the MPN domain; sequence FKLHPLVMLN…VTIYESEFHV (154 aa).

It belongs to the peptidase M67A family. CSN6 subfamily. In terms of assembly, component of the CSN complex, probably composed of CSN1, CSN2, CSN3, CSN4, CSN5 (CSN5A or CSN5B), CSN6 (CSN6A or CSN6B), CSN7 and CSN8. Interacts with itself. In the complex, it probably interacts directly with CSN4, CSN5A or CSN5B, and CSN7. Binds to the translation initiation factors TIF3E1.

The protein localises to the cytoplasm. It localises to the nucleus. Functionally, component of the COP9 signalosome complex (CSN), a complex involved in various cellular and developmental processes such as photomorphogenesis and auxin and jasmonate responses. The CSN complex is an essential regulator of the ubiquitin (Ubl) conjugation pathway by mediating the deneddylation of the cullin subunits of SCF-type E3 ligase complexes, leading to decrease the Ubl ligase activity of SCF. It is involved in repression of photomorphogenesis in darkness by regulating the activity of COP1-containing Ubl ligase complexes. The complex is also required for degradation of PSIAA6 by regulating the activity of the Ubl ligase SCF-TIR complex. Essential for the structural integrity of the CSN holocomplex. This chain is COP9 signalosome complex subunit 6b, found in Arabidopsis thaliana (Mouse-ear cress).